The chain runs to 421 residues: Enolase (421 aa).

Residue glutamine 162 coordinates (2R)-2-phosphoglycerate. Glutamate 204 (proton donor) is an active-site residue. Mg(2+) is bound by residues aspartate 241, glutamate 284, and aspartate 311. Residues lysine 336, arginine 365, serine 366, and lysine 387 each coordinate (2R)-2-phosphoglycerate. Catalysis depends on lysine 336, which acts as the Proton acceptor.

Belongs to the enolase family. It depends on Mg(2+) as a cofactor.

It localises to the cytoplasm. It is found in the secreted. The protein localises to the cell surface. It carries out the reaction (2R)-2-phosphoglycerate = phosphoenolpyruvate + H2O. It functions in the pathway carbohydrate degradation; glycolysis; pyruvate from D-glyceraldehyde 3-phosphate: step 4/5. In terms of biological role, catalyzes the reversible conversion of 2-phosphoglycerate (2-PG) into phosphoenolpyruvate (PEP). It is essential for the degradation of carbohydrates via glycolysis. This Nitratiruptor sp. (strain SB155-2) protein is Enolase.